Reading from the N-terminus, the 471-residue chain is Probable multidrug-efflux transporter MT1670 (471 aa).

14 consecutive transmembrane segments (helical) span residues isoleucine 23–leucine 43, leucine 55–asparagine 75, leucine 91–valine 111, leucine 116–leucine 136, alanine 146–phenylalanine 166, tryptophan 174–leucine 194, valine 213–leucine 233, leucine 237–valine 257, isoleucine 279–phenylalanine 299, proline 308–alanine 328, valine 337–alanine 357, valine 366–alanine 386, alanine 410–valine 430, and valine 438–alanine 458.

Belongs to the major facilitator superfamily.

It localises to the cell membrane. Could be involved in fluoroquinolones efflux. This is Probable multidrug-efflux transporter MT1670 from Mycobacterium tuberculosis (strain CDC 1551 / Oshkosh).